We begin with the raw amino-acid sequence, 544 residues long: Prolyl 4-hydroxylase subunit alpha-3 (544 aa).

A signal peptide spans 1–19 (MGPGARLAALLAVLALGTG). Residues 107 to 131 (LEASENIRALKDGYEKVEQDLPAFE) adopt a coiled-coil conformation. A TPR repeat occupies 227-260 (EDALDHLAFAYFRAGNVSCALSLSREFLLYSPDN). The N-linked (GlcNAc...) asparagine glycan is linked to asparagine 242. A Fe2OG dioxygenase domain is found at 422-529 (YAEYLQVVNY…KWVANKWIHE (108 aa)). 2 residues coordinate Fe cation: histidine 440 and aspartate 442. N-linked (GlcNAc...) asparagine glycosylation is present at asparagine 482. A Fe cation-binding site is contributed by histidine 510. Lysine 520 lines the 2-oxoglutarate pocket.

Belongs to the P4HA family. Heterotetramer of two alpha-3 chains and two beta chains (the beta chain is the multi-functional PDI). Requires Fe(2+) as cofactor. The cofactor is L-ascorbate. N-glycosylation plays no role in the catalytic activity. As to expression, highly expressed in placenta, liver and fetal skin. Weakly expressed in fetal epiphyseal cartilage, fetal liver, fibroblast, lung and skeletal muscle. Expressed also in fibrous cap of carotid atherosclerotic lesions.

The protein localises to the endoplasmic reticulum lumen. The catalysed reaction is L-prolyl-[collagen] + 2-oxoglutarate + O2 = trans-4-hydroxy-L-prolyl-[collagen] + succinate + CO2. Its function is as follows. Catalyzes the post-translational formation of 4-hydroxyproline in -Xaa-Pro-Gly- sequences in collagens and other proteins. In Homo sapiens (Human), this protein is Prolyl 4-hydroxylase subunit alpha-3 (P4HA3).